The following is a 369-amino-acid chain: MKSGRFIGVMSGTSLDGVDVVLATIDEHRVAQLASLSWPIPVSLKQAVLDICQGQQLTLSQFGQLDTQLGRLFADAVNALLKEQNLQARDIVAIGCHGQAVWHEPTGVAPHTLQIGDNNQIVARTGITVVGDFRRRDIALGGQGAPLVPAFHHALLAHSTERRMVLNIGGIANLSLLIPGQPVGGYDTGPGNMLMDAWIWRQAGKPYDKDAEWARAGKVILPLLQNMLSDPYFSQPAPKSTGREYFNYGWLERHLRHFPGVDPRDVQATLAELTAVTISEQVLLSGGCERLMVCGGGSRNPLLMARLAALLPGTEVTTTDAVGISGDDMEALAFAWLAWRTLAGLPGNLPSVTGASQETVLGAIFPANP.

An ATP-binding site is contributed by 12-19 (GTSLDGVD).

The protein belongs to the anhydro-N-acetylmuramic acid kinase family.

It catalyses the reaction 1,6-anhydro-N-acetyl-beta-muramate + ATP + H2O = N-acetyl-D-muramate 6-phosphate + ADP + H(+). The protein operates within amino-sugar metabolism; 1,6-anhydro-N-acetylmuramate degradation. It participates in cell wall biogenesis; peptidoglycan recycling. In terms of biological role, catalyzes the specific phosphorylation of 1,6-anhydro-N-acetylmuramic acid (anhMurNAc) with the simultaneous cleavage of the 1,6-anhydro ring, generating MurNAc-6-P. Is required for the utilization of anhMurNAc either imported from the medium or derived from its own cell wall murein, and thus plays a role in cell wall recycling. In Escherichia coli O139:H28 (strain E24377A / ETEC), this protein is Anhydro-N-acetylmuramic acid kinase.